A 156-amino-acid polypeptide reads, in one-letter code: Snaclec A12 (156 aa).

Positions 1–23 are cleaved as a signal peptide; the sequence is MGRSISVSFGLLVVFLSLSGTGA. Intrachain disulfides connect C27/C38, C55/C148, and C123/C140. The C-type lectin domain maps to 34–149; sequence YEGHCYKVFN…CELAYHFICM (116 aa).

The protein belongs to the snaclec family. In terms of assembly, heterodimer; disulfide-linked. Expressed by the venom gland.

It is found in the secreted. Functionally, interferes with one step of hemostasis (modulation of platelet aggregation, or coagulation cascade, for example). This Macrovipera lebetinus (Levantine viper) protein is Snaclec A12.